A 297-amino-acid polypeptide reads, in one-letter code: Mycothiol acetyltransferase (297 aa).

N-acetyltransferase domains lie at 7–156 (VFSD…VTIR) and 153–297 (VTIR…PPPH). Residue Glu38 participates in 1D-myo-inositol 2-(L-cysteinylamino)-2-deoxy-alpha-D-glucopyranoside binding. Residue 79 to 81 (VVV) participates in acetyl-CoA binding. Glu180, Lys219, and Glu227 together coordinate 1D-myo-inositol 2-(L-cysteinylamino)-2-deoxy-alpha-D-glucopyranoside. Acetyl-CoA-binding positions include 231 to 233 (VGV) and 238 to 244 (QGLGLGR). Tyr265 provides a ligand contact to 1D-myo-inositol 2-(L-cysteinylamino)-2-deoxy-alpha-D-glucopyranoside. Position 270–275 (270–275 (NRPALR)) interacts with acetyl-CoA.

This sequence belongs to the acetyltransferase family. MshD subfamily. In terms of assembly, monomer.

It carries out the reaction 1D-myo-inositol 2-(L-cysteinylamino)-2-deoxy-alpha-D-glucopyranoside + acetyl-CoA = mycothiol + CoA + H(+). Its function is as follows. Catalyzes the transfer of acetyl from acetyl-CoA to desacetylmycothiol (Cys-GlcN-Ins) to form mycothiol. The sequence is that of Mycothiol acetyltransferase from Thermomonospora curvata (strain ATCC 19995 / DSM 43183 / JCM 3096 / KCTC 9072 / NBRC 15933 / NCIMB 10081 / Henssen B9).